Reading from the N-terminus, the 177-residue chain is Large ribosomal subunit protein uL6 (177 aa).

The protein belongs to the universal ribosomal protein uL6 family. As to quaternary structure, part of the 50S ribosomal subunit.

This protein binds to the 23S rRNA, and is important in its secondary structure. It is located near the subunit interface in the base of the L7/L12 stalk, and near the tRNA binding site of the peptidyltransferase center. The protein is Large ribosomal subunit protein uL6 of Histophilus somni (strain 2336) (Haemophilus somnus).